Reading from the N-terminus, the 374-residue chain is Serpin B8 (374 aa).

The protein belongs to the serpin family. Ov-serpin subfamily.

It is found in the cytoplasm. In terms of biological role, has an important role in epithelial desmosome-mediated cell-cell adhesion. The sequence is that of Serpin B8 (SERPINB8) from Bos taurus (Bovine).